We begin with the raw amino-acid sequence, 307 residues long: Methionyl-tRNA formyltransferase (307 aa).

A (6S)-5,6,7,8-tetrahydrofolate-binding site is contributed by 108-111 (SLLP).

It belongs to the Fmt family.

The enzyme catalyses L-methionyl-tRNA(fMet) + (6R)-10-formyltetrahydrofolate = N-formyl-L-methionyl-tRNA(fMet) + (6S)-5,6,7,8-tetrahydrofolate + H(+). Functionally, attaches a formyl group to the free amino group of methionyl-tRNA(fMet). The formyl group appears to play a dual role in the initiator identity of N-formylmethionyl-tRNA by promoting its recognition by IF2 and preventing the misappropriation of this tRNA by the elongation apparatus. The sequence is that of Methionyl-tRNA formyltransferase from Xanthomonas euvesicatoria pv. vesicatoria (strain 85-10) (Xanthomonas campestris pv. vesicatoria).